The following is a 172-amino-acid chain: Translation initiation factor IF-3 (172 aa).

This sequence belongs to the IF-3 family. In terms of assembly, monomer.

The protein resides in the cytoplasm. In terms of biological role, IF-3 binds to the 30S ribosomal subunit and shifts the equilibrium between 70S ribosomes and their 50S and 30S subunits in favor of the free subunits, thus enhancing the availability of 30S subunits on which protein synthesis initiation begins. The sequence is that of Translation initiation factor IF-3 from Haemophilus influenzae (strain ATCC 51907 / DSM 11121 / KW20 / Rd).